The primary structure comprises 235 residues: Phosphoribosylaminoimidazole-succinocarboxamide synthase (235 aa).

The protein belongs to the SAICAR synthetase family.

The catalysed reaction is 5-amino-1-(5-phospho-D-ribosyl)imidazole-4-carboxylate + L-aspartate + ATP = (2S)-2-[5-amino-1-(5-phospho-beta-D-ribosyl)imidazole-4-carboxamido]succinate + ADP + phosphate + 2 H(+). Its pathway is purine metabolism; IMP biosynthesis via de novo pathway; 5-amino-1-(5-phospho-D-ribosyl)imidazole-4-carboxamide from 5-amino-1-(5-phospho-D-ribosyl)imidazole-4-carboxylate: step 1/2. In Streptococcus sanguinis (strain SK36), this protein is Phosphoribosylaminoimidazole-succinocarboxamide synthase.